A 307-amino-acid polypeptide reads, in one-letter code: Pyridoxal 5'-phosphate synthase subunit PdxS (307 aa).

D-ribose 5-phosphate is bound at residue Asp37. Lys94 functions as the Schiff-base intermediate with D-ribose 5-phosphate in the catalytic mechanism. Residue Gly166 coordinates D-ribose 5-phosphate. Arg178 serves as a coordination point for D-glyceraldehyde 3-phosphate. D-ribose 5-phosphate-binding positions include Gly227 and 248–249 (GS).

It belongs to the PdxS/SNZ family. As to quaternary structure, in the presence of PdxT, forms a dodecamer of heterodimers.

The enzyme catalyses aldehydo-D-ribose 5-phosphate + D-glyceraldehyde 3-phosphate + L-glutamine = pyridoxal 5'-phosphate + L-glutamate + phosphate + 3 H2O + H(+). It participates in cofactor biosynthesis; pyridoxal 5'-phosphate biosynthesis. Functionally, catalyzes the formation of pyridoxal 5'-phosphate from ribose 5-phosphate (RBP), glyceraldehyde 3-phosphate (G3P) and ammonia. The ammonia is provided by the PdxT subunit. Can also use ribulose 5-phosphate and dihydroxyacetone phosphate as substrates, resulting from enzyme-catalyzed isomerization of RBP and G3P, respectively. This is Pyridoxal 5'-phosphate synthase subunit PdxS from Mycobacterium leprae (strain Br4923).